The primary structure comprises 305 residues: UDP-N-acetylenolpyruvoylglucosamine reductase 2 (305 aa).

In terms of domain architecture, FAD-binding PCMH-type spans 33 to 197; that stretch reads VGGKADVFVA…LEARFELEEG (165 aa). R176 is a catalytic residue. S226 (proton donor) is an active-site residue. E296 is an active-site residue.

This sequence belongs to the MurB family. Requires FAD as cofactor.

Its subcellular location is the cytoplasm. The catalysed reaction is UDP-N-acetyl-alpha-D-muramate + NADP(+) = UDP-N-acetyl-3-O-(1-carboxyvinyl)-alpha-D-glucosamine + NADPH + H(+). It participates in cell wall biogenesis; peptidoglycan biosynthesis. Functionally, cell wall formation. In Bacillus cereus (strain ATCC 10987 / NRS 248), this protein is UDP-N-acetylenolpyruvoylglucosamine reductase 2.